Reading from the N-terminus, the 78-residue chain is Acyl carrier protein (78 aa).

In terms of domain architecture, Carrier spans 2-77 (SEIASRVKAI…DAVSYIEANA (76 aa)). Ser-37 is subject to O-(pantetheine 4'-phosphoryl)serine.

It belongs to the acyl carrier protein (ACP) family. In terms of processing, 4'-phosphopantetheine is transferred from CoA to a specific serine of apo-ACP by AcpS. This modification is essential for activity because fatty acids are bound in thioester linkage to the sulfhydryl of the prosthetic group.

The protein resides in the cytoplasm. The protein operates within lipid metabolism; fatty acid biosynthesis. Carrier of the growing fatty acid chain in fatty acid biosynthesis. The protein is Acyl carrier protein of Phocaeicola vulgatus (strain ATCC 8482 / DSM 1447 / JCM 5826 / CCUG 4940 / NBRC 14291 / NCTC 11154) (Bacteroides vulgatus).